Reading from the N-terminus, the 171-residue chain is Co-chaperone protein HscB (171 aa).

The J domain occupies 2-74 (DYFTFFGLPA…LMRAEYLLSL (73 aa)).

Belongs to the HscB family. Interacts with HscA and stimulates its ATPase activity. Interacts with IscU.

Functionally, co-chaperone involved in the maturation of iron-sulfur cluster-containing proteins. Seems to help targeting proteins to be folded toward HscA. The chain is Co-chaperone protein HscB from Shigella sonnei (strain Ss046).